Consider the following 264-residue polypeptide: Type III pantothenate kinase (264 aa).

An ATP-binding site is contributed by 6–13 (DVGNTNIK). 108 to 111 (GSDR) is a substrate binding site. The Proton acceptor role is filled by aspartate 110. An ATP-binding site is contributed by threonine 134.

This sequence belongs to the type III pantothenate kinase family. As to quaternary structure, homodimer. It depends on NH4(+) as a cofactor. Requires K(+) as cofactor.

The protein localises to the cytoplasm. It carries out the reaction (R)-pantothenate + ATP = (R)-4'-phosphopantothenate + ADP + H(+). The protein operates within cofactor biosynthesis; coenzyme A biosynthesis; CoA from (R)-pantothenate: step 1/5. In terms of biological role, catalyzes the phosphorylation of pantothenate (Pan), the first step in CoA biosynthesis. This Ehrlichia canis (strain Jake) protein is Type III pantothenate kinase.